Consider the following 441-residue polypeptide: Cysteine desulfurase, mitosomal (441 aa).

Pyridoxal 5'-phosphate-binding positions include 107–108 (AT), Asn-189, Gln-217, and 237–239 (SGH). Lys-240 carries the N6-(pyridoxal phosphate)lysine modification. Thr-277 contributes to the pyridoxal 5'-phosphate binding site. Cys-367 (cysteine persulfide intermediate) is an active-site residue. Residue Cys-367 coordinates [2Fe-2S] cluster.

The protein belongs to the class-V pyridoxal-phosphate-dependent aminotransferase family. NifS/IscS subfamily. Interacts with ISD11. Pyridoxal 5'-phosphate is required as a cofactor.

The protein resides in the mitosome. The enzyme catalyses (sulfur carrier)-H + L-cysteine = (sulfur carrier)-SH + L-alanine. Catalyzes the removal of elemental sulfur from cysteine to produce alanine. It supplies the inorganic sulfur for iron-sulfur (Fe-S) clusters in mitosomes. This Trachipleistophora hominis (Microsporidian parasite) protein is Cysteine desulfurase, mitosomal.